Reading from the N-terminus, the 652-residue chain is DNA ligase (652 aa).

NAD(+)-binding positions include 29-33 (DSEYD), 78-79 (SL), and E107. Residue K109 is the N6-AMP-lysine intermediate of the active site. The NAD(+) site is built by R130, E164, K278, and K302. 4 residues coordinate Zn(2+): C395, C398, C413, and C418. A BRCT domain is found at 577 to 652 (DRQAELFGLT…IEDEDWLLNL (76 aa)).

This sequence belongs to the NAD-dependent DNA ligase family. LigA subfamily. Requires Mg(2+) as cofactor. Mn(2+) serves as cofactor.

The catalysed reaction is NAD(+) + (deoxyribonucleotide)n-3'-hydroxyl + 5'-phospho-(deoxyribonucleotide)m = (deoxyribonucleotide)n+m + AMP + beta-nicotinamide D-nucleotide.. DNA ligase that catalyzes the formation of phosphodiester linkages between 5'-phosphoryl and 3'-hydroxyl groups in double-stranded DNA using NAD as a coenzyme and as the energy source for the reaction. It is essential for DNA replication and repair of damaged DNA. The sequence is that of DNA ligase from Streptococcus equi subsp. zooepidemicus (strain MGCS10565).